The primary structure comprises 513 residues: Catalase (513 aa).

A signal peptide spans 1 to 30 (MNPSLNAFRPGRLLVAASLTASLLSLSVQA). Active-site residues include His-81 and Asn-153. Tyr-361 provides a ligand contact to heme. Over residues 391–407 (DGALNAGHSTSGVNYQP) the composition is skewed to polar residues. A disordered region spans residues 391–413 (DGALNAGHSTSGVNYQPSRLDPR).

It belongs to the catalase family. Heme is required as a cofactor.

It localises to the periplasm. It catalyses the reaction 2 H2O2 = O2 + 2 H2O. In terms of biological role, decomposes hydrogen peroxide into water and oxygen; serves to protect cells from the toxic effects of hydrogen peroxide. The sequence is that of Catalase (katB) from Pseudomonas aeruginosa (strain ATCC 15692 / DSM 22644 / CIP 104116 / JCM 14847 / LMG 12228 / 1C / PRS 101 / PAO1).